The chain runs to 478 residues: CDK5 and ABL1 enzyme substrate 2 (478 aa).

Positions 1 to 121 (MAAAAAGGAP…GLGLDGQRQR (121 aa)) are disordered. Pro residues predominate over residues 11–24 (GPAPGPAGPPPPAA). Residues 25-35 (PTSAARAPPQA) show a composition bias toward low complexity. Positions 36–46 (LRRRGDSRRRQ) are enriched in basic residues. Pro residues predominate over residues 69–92 (EKPPPPPAEAREPPAPPPPEPPTG). Phosphoserine is present on residues serine 130 and serine 208. The segment at 257–296 (SDSHGLLPTPRPSVPRTLPGSRHKPAPTKSAPASTELGSD) is disordered.

Belongs to the cyclin family. In terms of assembly, binds to CDK3, CDK5 and ABL1. The C-terminal cyclin-box-like region binds to CDK5.

Its function is as follows. Unknown. Probably involved in G1-S cell cycle transition. The polypeptide is CDK5 and ABL1 enzyme substrate 2 (CABLES2) (Homo sapiens (Human)).